Consider the following 309-residue polypeptide: Prephenate dehydratase (309 aa).

Positions 3-191 constitute a Prephenate dehydratase domain; sequence GIAYLGPEGT…ARTRFVLVGC (189 aa). One can recognise an ACT domain in the interval 205 to 282; the sequence is SVVLRLDNVP…ADVRYLGSWP (78 aa).

In terms of assembly, homodimer.

It catalyses the reaction prephenate + H(+) = 3-phenylpyruvate + CO2 + H2O. It functions in the pathway amino-acid biosynthesis; L-phenylalanine biosynthesis; phenylpyruvate from prephenate: step 1/1. In Mycolicibacterium gilvum (strain PYR-GCK) (Mycobacterium gilvum (strain PYR-GCK)), this protein is Prephenate dehydratase (pheA).